The chain runs to 456 residues: Phosphomannomutase (456 aa).

Residue Ser-98 is the Phosphoserine intermediate of the active site. Ser-98, Asp-245, Asp-247, and Asp-249 together coordinate Mg(2+).

The protein belongs to the phosphohexose mutase family. The cofactor is Mg(2+).

The enzyme catalyses alpha-D-mannose 1-phosphate = D-mannose 6-phosphate. Its pathway is nucleotide-sugar biosynthesis; GDP-alpha-D-mannose biosynthesis; alpha-D-mannose 1-phosphate from D-fructose 6-phosphate: step 2/2. Functionally, involved in the biosynthesis of the capsular polysaccharide colanic acid. This is Phosphomannomutase (manB) from Salmonella typhimurium (strain LT2 / SGSC1412 / ATCC 700720).